Here is a 381-residue protein sequence, read N- to C-terminus: Pentraxin-related protein PTX3 (381 aa).

Residues 1–17 (MHLPAILLCALWSAVVA) form the signal peptide. 2 disulfides stabilise this stretch: C179–C357 and C210–C271. The Pentraxin (PTX) domain maps to 179–381 (CETAIFFPMR…QAHGGAQYVS (203 aa)). Residue N220 is glycosylated (N-linked (GlcNAc...) asparagine).

Homooctamer; disulfide-linked. Binds to C1q.

The protein resides in the secreted. Functionally, plays a role in the regulation of innate resistance to pathogens, inflammatory reactions, possibly clearance of self-components and female fertility. In Mus musculus (Mouse), this protein is Pentraxin-related protein PTX3 (Ptx3).